A 430-amino-acid chain; its full sequence is Asparagine--tRNA ligase (430 aa).

Belongs to the class-II aminoacyl-tRNA synthetase family. As to quaternary structure, homodimer.

It localises to the cytoplasm. The enzyme catalyses tRNA(Asn) + L-asparagine + ATP = L-asparaginyl-tRNA(Asn) + AMP + diphosphate + H(+). In Geobacillus thermodenitrificans (strain NG80-2), this protein is Asparagine--tRNA ligase.